The sequence spans 286 residues: Bifunctional protein FolD (286 aa).

Residues G165–S167, S190, and V231 each bind NADP(+).

The protein belongs to the tetrahydrofolate dehydrogenase/cyclohydrolase family. In terms of assembly, homodimer.

The catalysed reaction is (6R)-5,10-methylene-5,6,7,8-tetrahydrofolate + NADP(+) = (6R)-5,10-methenyltetrahydrofolate + NADPH. It catalyses the reaction (6R)-5,10-methenyltetrahydrofolate + H2O = (6R)-10-formyltetrahydrofolate + H(+). Its pathway is one-carbon metabolism; tetrahydrofolate interconversion. Its function is as follows. Catalyzes the oxidation of 5,10-methylenetetrahydrofolate to 5,10-methenyltetrahydrofolate and then the hydrolysis of 5,10-methenyltetrahydrofolate to 10-formyltetrahydrofolate. The chain is Bifunctional protein FolD from Bacillus cereus (strain G9842).